An 875-amino-acid polypeptide reads, in one-letter code: Serine/threonine-protein kinase ATG1 (875 aa).

Residues 22-318 enclose the Protein kinase domain; sequence YSIGPEIGKG…FNEFFNDPLI (297 aa). ATP is bound by residues 28-36 and Lys-51; that span reads IGKGSFATV. The Proton acceptor role is filled by Asp-168. Over residues 367 to 379 the composition is skewed to basic and acidic residues; sequence EKSKQDLPAREVS. Disordered stretches follow at residues 367–422 and 470–515; these read EKSK…QPHN and INPR…DRRI. Polar residues predominate over residues 380-389; it reads THASESQTKA. Positions 390-405 are enriched in basic and acidic residues; the sequence is VDTRPSSRDEEIKEII. Polar residues-rich tracts occupy residues 406–420, 473–490, and 497–508; these read NKNS…SIQP, RRTS…NNMQ, and LRSNSSGSQRRP.

Belongs to the protein kinase superfamily. Ser/Thr protein kinase family. APG1/unc-51/ULK1 subfamily. As to quaternary structure, homodimer. Forms a ternary complex with ATG13 and ATG17.

It localises to the cytoplasm. Its subcellular location is the preautophagosomal structure membrane. The catalysed reaction is L-seryl-[protein] + ATP = O-phospho-L-seryl-[protein] + ADP + H(+). It carries out the reaction L-threonyl-[protein] + ATP = O-phospho-L-threonyl-[protein] + ADP + H(+). Its function is as follows. Serine/threonine protein kinase involved in the cytoplasm to vacuole transport (Cvt) and found to be essential in autophagy, where it is required for the formation of autophagosomes. Involved in the clearance of protein aggregates which cannot be efficiently cleared by the proteasome. Required for selective autophagic degradation of the nucleus (nucleophagy) as well as for mitophagy which contributes to regulate mitochondrial quantity and quality by eliminating the mitochondria to a basal level to fulfill cellular energy requirements and preventing excess ROS production. Also involved in endoplasmic reticulum-specific autophagic process, in selective removal of ER-associated degradation (ERAD) substrates. Plays a key role in ATG9 and ATG23 cycling through the pre-autophagosomal structure and is necessary to promote ATG18 binding to ATG9 through phosphorylation of ATG9. Catalyzes phosphorylation of ATG4, decreasing the interaction between ATG4 and ATG8 and impairing deconjugation of PE-conjugated forms of ATG8. This is Serine/threonine-protein kinase ATG1 from Debaryomyces hansenii (strain ATCC 36239 / CBS 767 / BCRC 21394 / JCM 1990 / NBRC 0083 / IGC 2968) (Yeast).